Consider the following 335-residue polypeptide: NmrA-like family domain-containing oxidoreductase hkm9 (335 aa).

NADP(+) is bound by residues 12–17 (GATGNQ), 38–42 (RNPNS), 59–60 (DG), 80–82 (INS), K137, and 161–164 (YLEN).

Belongs to the NmrA-type oxidoreductase family.

Its pathway is secondary metabolite biosynthesis. In terms of biological role, nmrA-like family domain-containing oxidoreductase; part of the gene cluster that mediates the biosynthesis of hancockiamides, an unusual new family of N-cinnamoylated piperazines. The NRPS hkm10 and the NmrA-like reductase hkm9 are proposed to convert two molecules of L-Phe to the intermediary piperazine called xenocockiamide A. Xenocockiamide A is then converted to hancockiamide D via a series of hydroxylations and O-methylations. The tyrosinase hkm6 may catalyze an aromatic hydroxylation, then the 2-oxoglutarate-dependent Fe(II) dioxygenase hkm4 and the FAD-dependent phenol hydroxylase hkm7 may catalyze consecutive hydroxylations to install 2 more hydroxy groups, and the methyltransferase hkm8 probably catalyzes two methylations using 2 molecules of S-adenosyl-L-methionine (SAM). The NRPS hkm11 activates and transfers trans-cinnamate supplied by the PAL hkm12 to hancockiamide D and produces hancockiamide A. NRPS Hkm11 has the flexibility to tolerate the bulky hancockiamide G as a substrate and the absence of the acetyl-transferase hkm3 opens up the opportunity for hkm11 to introduce a second N-cinnamoyl moiety. The cytochrome P450 monooxygenase hkm5 catalyzes the methylenedioxy bridge formation, converting hancockiamide A into hancockiamide G. Hkm5 can also convert hancockiamide B into hancockiamide C, and hancockiamide D into hancockiamide H. The N-acetyltransferase hkm3 finally transfers an acetyl group to 1-N of piperazine, converting hancockiamide A into hancockiamide B and hancockiamide G into hancockiamide C. The protein is NmrA-like family domain-containing oxidoreductase hkm9 of Aspergillus hancockii.